The following is an 853-amino-acid chain: Auxin response factor 23 (853 aa).

Residues 118-141 form a disordered region; sequence PESKQQEDNGSTEEEVPSAPAAGH. The segment at residues 149-251 is a DNA-binding region (TF-B3); it reads FCKTLTASDT…ELRVGVRRAM (103 aa). 2 disordered regions span residues 422-484 and 647-723; these read ESEP…RMQM and PAKS…QGVS. Residues 425–455 are compositionally biased toward polar residues; that stretch reads PNGTQRTFQTQENATPKSGFGNSSELESAQK. Residues 672-686 show a composition bias toward basic and acidic residues; it reads EWRRPDVTEVEKCSD. Residues 706–723 show a composition bias toward polar residues; it reads PSSQQASRNMSCKSQGVS. Positions 725 to 809 constitute a PB1 domain; the sequence is RSCKKVHKQG…HKIFIYTREE (85 aa). The interval 815 to 853 is disordered; that stretch reads PGTLNSRSEDSHANSMERGSVGREMRGCLSTSSLNSENC. Over residues 843 to 853 the composition is skewed to polar residues; it reads LSTSSLNSENC.

It belongs to the ARF family. As to quaternary structure, homodimers and heterodimers. Interacts with CRL1. Expressed in roots, culms, leaves and young panicles.

Its subcellular location is the nucleus. Its function is as follows. Auxin response factors (ARFs) are transcriptional factors that bind specifically to the DNA sequence 5'-TGTCTC-3' found in the auxin-responsive promoter elements (AuxREs). This Oryza sativa subsp. japonica (Rice) protein is Auxin response factor 23 (ARF23).